The following is a 526-amino-acid chain: Aspartate ammonia-lyase (526 aa).

The tract at residues 1-44 (MSKTSNKSSADSKNDAKAEDIVNGENQIATNESQSSDSAAVSER) is disordered. The segment covering 10–20 (ADSKNDAKAED) has biased composition (basic and acidic residues). Residues 24-39 (GENQIATNESQSSDSA) show a composition bias toward polar residues. L-aspartate-binding residues include threonine 155, serine 194, threonine 195, asparagine 196, and threonine 241. The tract at residues 371 to 380 (GSSIMPAKVN) is SS loop. The active-site Proton acceptor is the serine 372. The L-aspartate site is built by serine 373 and lysine 378.

This sequence belongs to the class-II fumarase/aspartase family. Aspartase subfamily. Homotetramer.

The catalysed reaction is L-aspartate = fumarate + NH4(+). In terms of biological role, catalyzes the reversible conversion of L-aspartate to fumarate and ammonia. This Corynebacterium glutamicum (strain ATCC 13032 / DSM 20300 / JCM 1318 / BCRC 11384 / CCUG 27702 / LMG 3730 / NBRC 12168 / NCIMB 10025 / NRRL B-2784 / 534) protein is Aspartate ammonia-lyase.